We begin with the raw amino-acid sequence, 170 residues long: Adenine phosphoribosyltransferase (170 aa).

This sequence belongs to the purine/pyrimidine phosphoribosyltransferase family. As to quaternary structure, homodimer.

The protein localises to the cytoplasm. The enzyme catalyses AMP + diphosphate = 5-phospho-alpha-D-ribose 1-diphosphate + adenine. It participates in purine metabolism; AMP biosynthesis via salvage pathway; AMP from adenine: step 1/1. Its function is as follows. Catalyzes a salvage reaction resulting in the formation of AMP, that is energically less costly than de novo synthesis. This Clostridioides difficile (strain 630) (Peptoclostridium difficile) protein is Adenine phosphoribosyltransferase.